We begin with the raw amino-acid sequence, 407 residues long: Putative cystathionine beta-lyase (407 aa).

Lys-237 is subject to N6-(pyridoxal phosphate)lysine.

Belongs to the class-II pyridoxal-phosphate-dependent aminotransferase family. MalY/PatB cystathionine beta-lyase subfamily. Requires pyridoxal 5'-phosphate as cofactor.

It carries out the reaction L,L-cystathionine + H2O = L-homocysteine + pyruvate + NH4(+). The catalysed reaction is an S-substituted L-cysteine + H2O = a thiol + pyruvate + NH4(+). It participates in amino-acid biosynthesis; L-methionine biosynthesis via de novo pathway; L-homocysteine from L-cystathionine: step 1/1. The sequence is that of Putative cystathionine beta-lyase from Mycobacterium tuberculosis (strain CDC 1551 / Oshkosh).